A 415-amino-acid chain; its full sequence is Serine hydroxymethyltransferase (415 aa).

Residues leucine 118 and glycine 122–leucine 124 each bind (6S)-5,6,7,8-tetrahydrofolate. At lysine 227 the chain carries N6-(pyridoxal phosphate)lysine.

This sequence belongs to the SHMT family. Homodimer. Pyridoxal 5'-phosphate serves as cofactor.

It is found in the cytoplasm. The enzyme catalyses (6R)-5,10-methylene-5,6,7,8-tetrahydrofolate + glycine + H2O = (6S)-5,6,7,8-tetrahydrofolate + L-serine. The protein operates within one-carbon metabolism; tetrahydrofolate interconversion. It functions in the pathway amino-acid biosynthesis; glycine biosynthesis; glycine from L-serine: step 1/1. In terms of biological role, catalyzes the reversible interconversion of serine and glycine with tetrahydrofolate (THF) serving as the one-carbon carrier. This reaction serves as the major source of one-carbon groups required for the biosynthesis of purines, thymidylate, methionine, and other important biomolecules. Also exhibits THF-independent aldolase activity toward beta-hydroxyamino acids, producing glycine and aldehydes, via a retro-aldol mechanism. The sequence is that of Serine hydroxymethyltransferase from Elusimicrobium minutum (strain Pei191).